Consider the following 353-residue polypeptide: Photosystem II protein D1 (353 aa).

Thr2 is modified (N-acetylthreonine). Thr2 is subject to Phosphothreonine. A run of 3 helical transmembrane segments spans residues 29 to 46 (YIGW…TATS), 118 to 133 (HFFL…EWEL), and 142 to 156 (WIAV…AATA). His118 provides a ligand contact to chlorophyll a. Tyr126 contributes to the pheophytin a binding site. Positions 170 and 189 each coordinate [CaMn4O5] cluster. Residues 197 to 218 (FHMLGVAGVFGGSLFSAMHGSL) form a helical membrane-spanning segment. His198 lines the chlorophyll a pocket. A quinone is bound by residues His215 and 264 to 265 (SF). Position 215 (His215) interacts with Fe cation. His272 lines the Fe cation pocket. Residues 274–288 (FLAAWPVVGIWFTAL) form a helical membrane-spanning segment. [CaMn4O5] cluster is bound by residues His332, Glu333, Asp342, and Ala344. Positions 345–353 (VVEAPAVNG) are excised as a propeptide.

The protein belongs to the reaction center PufL/M/PsbA/D family. As to quaternary structure, PSII is composed of 1 copy each of membrane proteins PsbA, PsbB, PsbC, PsbD, PsbE, PsbF, PsbH, PsbI, PsbJ, PsbK, PsbL, PsbM, PsbT, PsbX, PsbY, PsbZ, Psb30/Ycf12, at least 3 peripheral proteins of the oxygen-evolving complex and a large number of cofactors. It forms dimeric complexes. It depends on The D1/D2 heterodimer binds P680, chlorophylls that are the primary electron donor of PSII, and subsequent electron acceptors. It shares a non-heme iron and each subunit binds pheophytin, quinone, additional chlorophylls, carotenoids and lipids. D1 provides most of the ligands for the Mn4-Ca-O5 cluster of the oxygen-evolving complex (OEC). There is also a Cl(-1) ion associated with D1 and D2, which is required for oxygen evolution. The PSII complex binds additional chlorophylls, carotenoids and specific lipids. as a cofactor. Post-translationally, tyr-161 forms a radical intermediate that is referred to as redox-active TyrZ, YZ or Y-Z. In terms of processing, C-terminally processed by CTPA; processing is essential to allow assembly of the oxygen-evolving complex and thus photosynthetic growth.

It localises to the plastid. The protein localises to the chloroplast thylakoid membrane. It carries out the reaction 2 a plastoquinone + 4 hnu + 2 H2O = 2 a plastoquinol + O2. Photosystem II (PSII) is a light-driven water:plastoquinone oxidoreductase that uses light energy to abstract electrons from H(2)O, generating O(2) and a proton gradient subsequently used for ATP formation. It consists of a core antenna complex that captures photons, and an electron transfer chain that converts photonic excitation into a charge separation. The D1/D2 (PsbA/PsbD) reaction center heterodimer binds P680, the primary electron donor of PSII as well as several subsequent electron acceptors. The protein is Photosystem II protein D1 of Chlorella vulgaris (Green alga).